Reading from the N-terminus, the 698-residue chain is Effector protein AvrPphDPgy (698 aa).

Polar residues predominate over residues 1–15 (MNPLRSIQHNITTPP). Disordered regions lie at residues 1–36 (MNPL…HPKR) and 171–200 (VDSS…DSDS). Residues 172–181 (DSSSPLLSSP) are compositionally biased toward low complexity.

The protein localises to the secreted. Its function is as follows. Effector protein involved in non-host recognition. This is Effector protein AvrPphDPgy (avrPphDPgy) from Pseudomonas savastanoi pv. glycinea (Pseudomonas syringae pv. glycinea).